The sequence spans 578 residues: Zinc finger protein with KRAB and SCAN domains 8 (578 aa).

The tract at residues 1-20 is disordered; the sequence is MAEESRKPSAPSPPDQTPEE. Serine 12 carries the phosphoserine modification. A Glycyl lysine isopeptide (Lys-Gly) (interchain with G-Cter in SUMO2) cross-link involves residue lysine 26. The region spanning 51–133 is the SCAN box domain; it reads RLRFRQLRYQ…TLLEDLERQI (83 aa). The tract at residues 158–205 is disordered; the sequence is ASAPEPPNTQLQSEATQHKSPVPQESQERAMSTSQSPTRSQKGSSGDQ. A compositionally biased stretch (polar residues) spans 165–205; that stretch reads NTQLQSEATQHKSPVPQESQERAMSTSQSPTRSQKGSSGDQ. Residues lysine 176 and lysine 199 each participate in a glycyl lysine isopeptide (Lys-Gly) (interchain with G-Cter in SUMO2) cross-link. Position 201 is a phosphoserine (serine 201). One can recognise a KRAB domain in the interval 220–316; the sequence is EKIEDMAVSL…GRLERQRGNP (97 aa). Glycyl lysine isopeptide (Lys-Gly) (interchain with G-Cter in SUMO2) cross-links involve residues lysine 221, lysine 272, and lysine 288. 2 C2H2-type zinc fingers span residues 322–344 and 350–372; these read HKCDECGKSFAQSSGLVRHWRIH and YQCNVCGKAFSYRSALLSHQDIH. Glycyl lysine isopeptide (Lys-Gly) (interchain with G-Cter in SUMO2) cross-links involve residues lysine 374 and lysine 376. C2H2-type zinc fingers lie at residues 378-400, 406-428, 434-456, 462-484, 490-512, 518-540, and 546-568; these read YHCKECGKAFSQNTGLILHQRIH, YQCNQCGKAFSQSAGLILHQRIH, YECNECGKAFSHSSHLIGHQRIH, YECDECGKTFRRSSHLIGHQRSH, YKCNECGRAFSQKSGLIEHQRIH, YKCKECGKAFNGNTGLIQHLRIH, and YQCNECGKAFIQRSSLIRHQRIH. Residues lysine 413 and lysine 441 each participate in a glycyl lysine isopeptide (Lys-Gly) (interchain with G-Cter in SUMO2) cross-link. Residue lysine 502 forms a Glycyl lysine isopeptide (Lys-Gly) (interchain with G-Cter in SUMO2) linkage. A Glycyl lysine isopeptide (Lys-Gly) (interchain with G-Cter in SUMO2) cross-link involves residue lysine 572.

This sequence belongs to the krueppel C2H2-type zinc-finger protein family.

It localises to the nucleus. In terms of biological role, may be involved in transcriptional regulation. The protein is Zinc finger protein with KRAB and SCAN domains 8 (ZKSCAN8) of Homo sapiens (Human).